We begin with the raw amino-acid sequence, 195 residues long: Interferon tau-1 (195 aa).

The N-terminal stretch at 1–23 (MAFVLSLLMALVLVSYGPGRSLG) is a signal peptide. 2 disulfide bridges follow: C24/C122 and C52/C162. N101 carries N-linked (GlcNAc...) asparagine glycosylation.

It belongs to the alpha/beta interferon family. IFN-alphaII subfamily. As to expression, constitutively and exclusively expressed in the mononuclear cells of the extraembryonic trophectoderm.

It is found in the secreted. Paracrine hormone primarily responsible for maternal recognition of pregnancy. Interacts with endometrial receptors, probably type I interferon receptors, and blocks estrogen receptor expression, preventing the estrogen-induced increase in oxytocin receptor expression in the endometrium. This results in the suppression of the pulsatile endometrial release of the luteolytic hormone prostaglandin F2-alpha, hindering the regression of the corpus luteum (luteolysis) and therefore a return to ovarian cyclicity. This, and a possible direct effect of IFN-tau on prostaglandin synthesis, leads in turn to continued ovarian progesterone secretion, which stimulates the secretion by the endometrium of the nutrients required for the growth of the conceptus. In summary, displays particularly high antiviral and antiproliferative potency concurrently with particular weak cytotoxicity, high antiluteolytic activity and immunomodulatory properties. In contrast with other IFNs, IFN-tau is not virally inducible. The chain is Interferon tau-1 (IFNT1) from Bos taurus (Bovine).